Reading from the N-terminus, the 491-residue chain is Glycogen synthase 2 (491 aa).

Lysine 16 is an ADP-alpha-D-glucose binding site.

The protein belongs to the glycosyltransferase 1 family. Bacterial/plant glycogen synthase subfamily.

The enzyme catalyses [(1-&gt;4)-alpha-D-glucosyl](n) + ADP-alpha-D-glucose = [(1-&gt;4)-alpha-D-glucosyl](n+1) + ADP + H(+). It functions in the pathway glycan biosynthesis; glycogen biosynthesis. Synthesizes alpha-1,4-glucan chains using ADP-glucose. This chain is Glycogen synthase 2, found in Nitrosococcus oceani (strain ATCC 19707 / BCRC 17464 / JCM 30415 / NCIMB 11848 / C-107).